Reading from the N-terminus, the 320-residue chain is Cytochrome f (320 aa).

The first 35 residues, 1–35 (MQTRNTLSWIREEITRSISVSLMIYIITWASISSA), serve as a signal peptide directing secretion. Residues tyrosine 36, cysteine 56, cysteine 59, and histidine 60 each contribute to the heme site. Residues 286–306 (VQGLLFFLGSVVLAQIFLVLK) form a helical membrane-spanning segment.

The protein belongs to the cytochrome f family. As to quaternary structure, the 4 large subunits of the cytochrome b6-f complex are cytochrome b6, subunit IV (17 kDa polypeptide, petD), cytochrome f and the Rieske protein, while the 4 small subunits are PetG, PetL, PetM and PetN. The complex functions as a dimer. Requires heme as cofactor.

The protein localises to the plastid. It localises to the chloroplast thylakoid membrane. In terms of biological role, component of the cytochrome b6-f complex, which mediates electron transfer between photosystem II (PSII) and photosystem I (PSI), cyclic electron flow around PSI, and state transitions. This Olimarabidopsis pumila (Dwarf rocket) protein is Cytochrome f.